We begin with the raw amino-acid sequence, 254 residues long: Glutamate racemase (254 aa).

Substrate is bound by residues 10–11 (DS) and 42–43 (YG). Cys-73 acts as the Proton donor/acceptor in catalysis. 74–75 (NT) lines the substrate pocket. Catalysis depends on Cys-183, which acts as the Proton donor/acceptor. 184-185 (TH) contributes to the substrate binding site.

Belongs to the aspartate/glutamate racemases family.

It carries out the reaction L-glutamate = D-glutamate. It functions in the pathway cell wall biogenesis; peptidoglycan biosynthesis. Provides the (R)-glutamate required for cell wall biosynthesis. The chain is Glutamate racemase from Herpetosiphon aurantiacus (strain ATCC 23779 / DSM 785 / 114-95).